A 196-amino-acid polypeptide reads, in one-letter code: MSRYRGPRLKKIRRLGALLGLTRKTPKSGSNPKKKFHSGKKEQYRIRLQEKQKLRFHYGLTERQLLRYVYIAGKAKRSTGQVLLQLLEMRLDNILFRLGMASTIPGARQLVNHRHILVNGRIVNIPSFRCKPRDIITTKDNQRSKGLVQNSIASSDPGKLPKHLTIDTLEYKGLVNKILDRKWVGLKINELLVVEY.

A disordered region spans residues 22 to 42; the sequence is TRKTPKSGSNPKKKFHSGKKE. An S4 RNA-binding domain is found at 89–169; sequence MRLDNILFRL…LPKHLTIDTL (81 aa).

This sequence belongs to the universal ribosomal protein uS4 family. Part of the 30S ribosomal subunit. Contacts protein S5. The interaction surface between S4 and S5 is involved in control of translational fidelity.

It is found in the plastid. The protein resides in the chloroplast. In terms of biological role, one of the primary rRNA binding proteins, it binds directly to 16S rRNA where it nucleates assembly of the body of the 30S subunit. Functionally, with S5 and S12 plays an important role in translational accuracy. The chain is Small ribosomal subunit protein uS4c (rps4) from Melica altissima (Siberian melic grass).